We begin with the raw amino-acid sequence, 236 residues long: Transmembrane protein 70 homolog, mitochondrial (236 aa).

The N-terminal 64 residues, 1–64 (MLGLRAMLPK…WLSVKSTKTE (64 aa)), are a transit peptide targeting the mitochondrion. A run of 2 helical transmembrane segments spans residues 83–103 (MVKF…PILL) and 116–136 (VFLC…LHFI).

Belongs to the TMEM70 family. As to quaternary structure, associates with mitochondrial complex I assembly intermediates during its biogenesis.

The protein localises to the mitochondrion membrane. Its function is as follows. Scaffold protein that participates in the c-ring assembly of mitochondrial ATP synthase (F(1)F(0) ATP synthase or complex V). Also binds the mitochondrial proton-transporting ATP synthase complex I and may play a role in the stability of its membrane-bound subassemblies. This Drosophila melanogaster (Fruit fly) protein is Transmembrane protein 70 homolog, mitochondrial.